A 1133-amino-acid polypeptide reads, in one-letter code: Sterol regulatory element-binding protein 2 (1133 aa).

The interval 1–50 (MDENSELGGLETMETLTELGDELTLGDIDEMLQFVSNQVGEFSDLFSEQL) is transcriptional activation (acidic). Residues 1–473 (MDENSELGGL…VALGMVDRSR (473 aa)) are Cytoplasmic-facing. Positions 56 to 65 (GGGGGSGSGG) are enriched in gly residues. Residues 56–136 (GGGGGSGSGG…PQPQPQPPAQ (81 aa)) are disordered. Positions 92–109 (PLSTFSPSSTSPQAPALQ) are enriched in low complexity. Residues 114–134 (PTPPRATPVLQPRPQPQPQPP) show a composition bias toward pro residues. The segment at 229 to 483 (QQVPVLVQPQ…ILLCVLTFLG (255 aa)) is interaction with LMNA. In terms of domain architecture, bHLH spans 322–372 (ERRTTHNIIEKRYRSSINDKIIELKDLVMGTDAKMHKSGVLRKAIDYIKYL). The leucine-zipper stretch occupies residues 372–393 (LQQVNHKLRQENMVLKLANQKN). Lys456 participates in a covalent cross-link: Glycyl lysine isopeptide (Lys-Gly) (interchain with G-Cter in SUMO2). Residues 474 to 494 (ILLCVLTFLGLSFNPLTSLLQ) traverse the membrane as a helical segment. Over 495–525 (WGGAHNPDQHPYSGSGRNVLSLESGSGGWFD) the chain is Lumenal. Residues 526–546 (WMMPTLLLWLLNGVIVLSVFV) traverse the membrane as a helical segment. Residues 547–1133 (KLLVHGEPVI…LGGGTAIAAS (587 aa)) lie on the Cytoplasmic side of the membrane. Ser1090 carries the phosphoserine modification.

The protein belongs to the SREBP family. In terms of assembly, homodimer; efficient DNA binding of the soluble transcription factor fragment requires dimerization with another bHLH protein. Interacts with LMNA. Forms a tight complex with SCAP, the SCAP-SREBP complex, in the endoplasmic reticulum membrane and the Golgi apparatus. Interacts with PAQR3; the interaction anchors the SCAP-SREBP complex to the Golgi apparatus in low cholesterol conditions. Interacts (via C-terminal domain) with RNF139. Post-translationally, processed in the Golgi apparatus, releasing the protein from the membrane. At low cholesterol the SCAP-SREBP complex is recruited into COPII vesicles for export from the endoplasmic reticulum. In the Golgi, complex SREBPs are cleaved sequentially by site-1 (MBTPS1, S1P) and site-2 (MBTPS2, S2P) proteases. The first cleavage by site-1 protease occurs within the luminal loop, the second cleavage by site-2 protease occurs within the first transmembrane domain, releasing the transcription factor from the Golgi membrane. Apoptosis triggers cleavage by the cysteine proteases caspase-3 and caspase-7. Cleavage and activation is induced by mediated cholesterol efflux. Phosphorylated by AMPK, leading to suppress protein processing and nuclear translocation, and repress target gene expression. In terms of processing, SCAP-free SREBF2 is ubiquitinated by the BCR(ARMC5) complex, leading to its degradation. Post-translationally, ubiquitinated; the nuclear form has a rapid turnover and is rapidly ubiquitinated and degraded by the proteasome in the nucleus.

It localises to the endoplasmic reticulum membrane. The protein localises to the golgi apparatus membrane. Its subcellular location is the cytoplasmic vesicle. It is found in the COPII-coated vesicle membrane. The protein resides in the nucleus. With respect to regulation, activation by cleavage is down-regulated upon activation of SIRT3-dependent PRKAA1/AMPK-alpha signaling cascade which leads to inhibition of ATP-consuming lipogenesis to restore cellular energy balance. In terms of biological role, precursor of the transcription factor form (Processed sterol regulatory element-binding protein 2), which is embedded in the endoplasmic reticulum membrane. Low sterol concentrations promote processing of this form, releasing the transcription factor form that translocates into the nucleus and activates transcription of genes involved in cholesterol biosynthesis. Functionally, key transcription factor that regulates expression of genes involved in cholesterol biosynthesis. Binds to the sterol regulatory element 1 (SRE-1) (5'-ATCACCCCAC-3'). Has dual sequence specificity binding to both an E-box motif (5'-ATCACGTGA-3') and to SRE-1 (5'-ATCACCCCAC-3'). Regulates transcription of genes related to cholesterol synthesis pathway. Regulates hepatic lipogenesis. This is Sterol regulatory element-binding protein 2 from Rattus norvegicus (Rat).